The sequence spans 271 residues: Collectin-11 (271 aa).

Residues methionine 1–glycine 25 form the signal peptide. The Collagen-like domain maps to glycine 44–lysine 103. Residues alanine 46–proline 112 are disordered. The stretch at glutamate 124 to glutamate 148 forms a coiled coil. Positions threonine 149–glutamate 265 constitute a C-type lectin domain. Intrachain disulfides connect cysteine 170–cysteine 264 and cysteine 242–cysteine 256. Position 200 (arginine 200) interacts with a carbohydrate. The Ca(2+) site is built by aspartate 207, glutamate 211, glutamate 232, asparagine 234, asparagine 235, aspartate 238, glutamate 240, and aspartate 241. Glutamate 240 is an a carbohydrate binding site. A carbohydrate is bound by residues glutamate 244 and isoleucine 252 to valine 254. Aspartate 253 serves as a coordination point for Ca(2+).

Belongs to the COLEC10/COLEC11 family. Homotrimer; disulfide-linked. Interacts with MASP1; probably triggers the lectin pathway of complement.

It is found in the secreted. In terms of biological role, lectin that plays a role in innate immunity, apoptosis and embryogenesis. Calcium-dependent lectin that binds self and non-self glycoproteins presenting high mannose oligosaccharides with at least one terminal alpha-1,2-linked mannose epitope. Primarily recognizes the terminal disaccharide of the glycan. Also recognizes a subset of fucosylated glycans and lipopolysaccharides. Plays a role in innate immunity through its ability to bind non-self sugars presented by microorganisms and to activate the complement through the recruitment of MAPS1. Also plays a role in apoptosis through its ability to bind in a calcium-independent manner the DNA present at the surface of apoptotic cells and to activate the complement in response to this binding. Finally, plays a role in development, probably serving as a guidance cue during the migration of neural crest cells and other cell types during embryogenesis. The protein is Collectin-11 (colec11) of Danio rerio (Zebrafish).